The primary structure comprises 319 residues: Ankyrin repeat domain-containing protein 1 (319 aa).

The stretch at 63-89 (EKEREAELKKKKLEQRSKLENLEDLEI) forms a coiled coil. 5 ANK repeats span residues 152–181 (YKRT…QIEF), 185–214 (LEST…KISA), 218–247 (LLST…DLNA), 251–280 (EGDT…DLNV), and 284–315 (AGKT…KASR).

Interacts with TTN/titin and YBX1. As to expression, expressed in heart. In postnatal neonatal heart, it is expressed in an asymmetrical way; left ventricle favored towards right ventricle. Whether or not this could be correlated with a hypertrophic heart is still a matter of debate. Levels increase gradually from newborn to adult.

Its subcellular location is the nucleus. Functionally, may play an important role in endothelial cell activation. May act as a nuclear transcription factor that negatively regulates the expression of cardiac genes. The protein is Ankyrin repeat domain-containing protein 1 (ANKRD1) of Sus scrofa (Pig).